We begin with the raw amino-acid sequence, 449 residues long: tRNA-2-methylthio-N(6)-dimethylallyladenosine synthase (449 aa).

The MTTase N-terminal domain maps to 3-118 (KKVFVKTFGC…LPELLAQREA (116 aa)). [4Fe-4S] cluster is bound by residues C12, C49, C81, C155, C159, and C162. A Radical SAM core domain is found at 141 to 376 (RVEGASAFVS…VINANIKSIS (236 aa)). One can recognise a TRAM domain in the interval 377 to 440 (ESRVGTVQRI…AYTLRGEVVT (64 aa)).

The protein belongs to the methylthiotransferase family. MiaB subfamily. In terms of assembly, monomer. [4Fe-4S] cluster is required as a cofactor.

It localises to the cytoplasm. It carries out the reaction N(6)-dimethylallyladenosine(37) in tRNA + (sulfur carrier)-SH + AH2 + 2 S-adenosyl-L-methionine = 2-methylsulfanyl-N(6)-dimethylallyladenosine(37) in tRNA + (sulfur carrier)-H + 5'-deoxyadenosine + L-methionine + A + S-adenosyl-L-homocysteine + 2 H(+). Its function is as follows. Catalyzes the methylthiolation of N6-(dimethylallyl)adenosine (i(6)A), leading to the formation of 2-methylthio-N6-(dimethylallyl)adenosine (ms(2)i(6)A) at position 37 in tRNAs that read codons beginning with uridine. This chain is tRNA-2-methylthio-N(6)-dimethylallyladenosine synthase, found in Paracidovorax citrulli (strain AAC00-1) (Acidovorax citrulli).